A 368-amino-acid polypeptide reads, in one-letter code: Putative glutamate--cysteine ligase 2 (368 aa).

Belongs to the glutamate--cysteine ligase type 2 family. YbdK subfamily.

The enzyme catalyses L-cysteine + L-glutamate + ATP = gamma-L-glutamyl-L-cysteine + ADP + phosphate + H(+). Its function is as follows. ATP-dependent carboxylate-amine ligase which exhibits weak glutamate--cysteine ligase activity. This chain is Putative glutamate--cysteine ligase 2, found in Pseudomonas putida (strain ATCC 47054 / DSM 6125 / CFBP 8728 / NCIMB 11950 / KT2440).